Here is a 474-residue protein sequence, read N- to C-terminus: tRNA-2-methylthio-N(6)-dimethylallyladenosine synthase (474 aa).

One can recognise an MTTase N-terminal domain in the interval 3 to 120 (KKLHIKTWGC…LPEMINQVKG (118 aa)). Residues Cys-12, Cys-49, Cys-83, Cys-157, Cys-161, and Cys-164 each coordinate [4Fe-4S] cluster. The Radical SAM core domain occupies 143–375 (RAEGPTAFVS…QERINQQAMA (233 aa)). In terms of domain architecture, TRAM spans 378–441 (RRMLGTTQRI…PNSLRGKVIR (64 aa)).

Belongs to the methylthiotransferase family. MiaB subfamily. In terms of assembly, monomer. It depends on [4Fe-4S] cluster as a cofactor.

It is found in the cytoplasm. It catalyses the reaction N(6)-dimethylallyladenosine(37) in tRNA + (sulfur carrier)-SH + AH2 + 2 S-adenosyl-L-methionine = 2-methylsulfanyl-N(6)-dimethylallyladenosine(37) in tRNA + (sulfur carrier)-H + 5'-deoxyadenosine + L-methionine + A + S-adenosyl-L-homocysteine + 2 H(+). Functionally, catalyzes the methylthiolation of N6-(dimethylallyl)adenosine (i(6)A), leading to the formation of 2-methylthio-N6-(dimethylallyl)adenosine (ms(2)i(6)A) at position 37 in tRNAs that read codons beginning with uridine. The chain is tRNA-2-methylthio-N(6)-dimethylallyladenosine synthase from Cronobacter sakazakii (strain ATCC BAA-894) (Enterobacter sakazakii).